The chain runs to 153 residues: MDASTKTKKGAGGRKGGGPRKKSVTRSIRAGLQFPVGRIGRYLKKGRYAQRVGTGAPVYLAAVLEYLAAEVLELAGNAARDNKKNRIIPRHVLLAVRNDEELGKLLAGVTIAHGGVLPNINPVLLPKKTERSNTVSKEPKSPKPKAGKSPKKA.

Disordered regions lie at residues 1–24 (MDAS…KKSV) and 127–153 (KKTE…PKKA). Basic and acidic residues predominate over residues 127–141 (KKTERSNTVSKEPKS). Basic residues predominate over residues 142–153 (PKPKAGKSPKKA). The SPKK motif signature appears at 149-152 (SPKK).

This sequence belongs to the histone H2A family. In terms of assembly, the nucleosome is a histone octamer containing two molecules each of H2A, H2B, H3 and H4 assembled in one H3-H4 heterotetramer and two H2A-H2B heterodimers. The octamer wraps approximately 147 bp of DNA.

It localises to the nucleus. It is found in the chromosome. Functionally, core component of nucleosome. Nucleosomes wrap and compact DNA into chromatin, limiting DNA accessibility to the cellular machineries which require DNA as a template. Histones thereby play a central role in transcription regulation, DNA repair, DNA replication and chromosomal stability. DNA accessibility is regulated via a complex set of post-translational modifications of histones, also called histone code, and nucleosome remodeling. The polypeptide is Probable histone H2A.2 (Medicago truncatula (Barrel medic)).